Here is a 225-residue protein sequence, read N- to C-terminus: T4 protein (225 aa).

Belongs to the poxviruses B9 family.

This chain is T4 protein, found in Rabbit fibroma virus (strain Kasza) (RFV).